Here is a 611-residue protein sequence, read N- to C-terminus: MEPKEGGSPQATTLKRNKDKTMAKTFKKILKPGEKKKKQKAIVIAAIKQLIHYLETNCIELEGICRISGNNTKVKELKKQLENGEGDSIDFSKIDSHCVSGALKAFLRDGDEPLLTFDLYKNFLASIDIKDKNSKISFIKSLLSALPKENYDLLQILLKFLNTIQLHSSINKMTSSNLAIVFSPTLLRPKEESLESMMTDSNSISEVVRVLIEEFHVLYEIKQTLLYQVSAIDLGIREDKRSTSEQLEDAKVTIEQLKKHLNEEARERSILETYCTSMEQKLQELEDINKSLTEEKDSLGELLNEFKETNKNQANDINSLKNDIKDVTEKQTKTELERDELNKVKVKLEKDIETTRIELKSTNDECQKLKVNNNKLGEDIKNQMKEFEQTRKSLLENHKLEFEKHQLEIQQFRQENEQLKKEKTDADLQLERVQAEISILLSSSNDKNSKKNSLKNQKKDLDNALKKCKDQESKINQLEKEKSKLQDELTKLQKSSSSSSSSSSSSSSSQASHKFVFGKKPSSSKITTTTTTTTSPAQQPTTPPPPLDEDDIISVKKFAFYYMNLAIKTDAMTKGLPCNINSSEILEELLSKNIKVQQWSEVISKKLKENK.

Positions 24-219 (KTFKKILKPG…VLIEEFHVLY (196 aa)) constitute a Rho-GAP domain. A coiled-coil region spans residues 236–499 (IREDKRSTSE…TKLQKSSSSS (264 aa)). The span at 476–491 (NQLEKEKSKLQDELTK) shows a compositional bias: basic and acidic residues. The disordered stretch occupies residues 476-550 (NQLEKEKSKL…TTPPPPLDED (75 aa)). 2 stretches are compositionally biased toward low complexity: residues 495 to 509 (SSSS…SSSS) and 527 to 540 (TTTT…AQQP).

Its subcellular location is the cytoplasm. Rho GTPase-activating protein involved in the signal transduction pathway. The protein is Rho GTPase-activating protein gacN (gacN) of Dictyostelium discoideum (Social amoeba).